A 494-amino-acid chain; its full sequence is Aspartyl/glutamyl-tRNA(Asn/Gln) amidotransferase subunit B (494 aa).

The protein belongs to the GatB/GatE family. GatB subfamily. As to quaternary structure, heterotrimer of A, B and C subunits.

It carries out the reaction L-glutamyl-tRNA(Gln) + L-glutamine + ATP + H2O = L-glutaminyl-tRNA(Gln) + L-glutamate + ADP + phosphate + H(+). The enzyme catalyses L-aspartyl-tRNA(Asn) + L-glutamine + ATP + H2O = L-asparaginyl-tRNA(Asn) + L-glutamate + ADP + phosphate + 2 H(+). In terms of biological role, allows the formation of correctly charged Asn-tRNA(Asn) or Gln-tRNA(Gln) through the transamidation of misacylated Asp-tRNA(Asn) or Glu-tRNA(Gln) in organisms which lack either or both of asparaginyl-tRNA or glutaminyl-tRNA synthetases. The reaction takes place in the presence of glutamine and ATP through an activated phospho-Asp-tRNA(Asn) or phospho-Glu-tRNA(Gln). The chain is Aspartyl/glutamyl-tRNA(Asn/Gln) amidotransferase subunit B from Rhodopseudomonas palustris (strain ATCC BAA-98 / CGA009).